The sequence spans 193 residues: Putative manganese efflux pump MntP (193 aa).

Helical transmembrane passes span 6 to 26 (LLGL…AVGI), 41 to 61 (YHFG…GTGI), 65 to 85 (TQSY…ANMI), 107 to 127 (LIIL…SLSM), 132 to 152 (IWYP…FGML), and 169 to 189 (VLGG…NGVF).

Belongs to the MntP (TC 9.B.29) family.

The protein localises to the cell inner membrane. Probably functions as a manganese efflux pump. The sequence is that of Putative manganese efflux pump MntP from Desulfotalea psychrophila (strain LSv54 / DSM 12343).